The sequence spans 552 residues: Glutamine--tRNA ligase (552 aa).

The short motif at 33–43 (PEPNGYLHIGH) is the 'HIGH' region element. Residues 34-36 (EPN) and 40-46 (HIGHAKS) contribute to the ATP site. L-glutamine-binding residues include Asp-66 and Tyr-210. Residues Thr-229, 259 to 260 (RL), and 267 to 269 (MSK) contribute to the ATP site. The short motif at 266-270 (VMSKR) is the 'KMSKS' region element.

It belongs to the class-I aminoacyl-tRNA synthetase family. In terms of assembly, monomer.

The protein localises to the cytoplasm. The enzyme catalyses tRNA(Gln) + L-glutamine + ATP = L-glutaminyl-tRNA(Gln) + AMP + diphosphate. This is Glutamine--tRNA ligase from Clostridium perfringens (strain ATCC 13124 / DSM 756 / JCM 1290 / NCIMB 6125 / NCTC 8237 / Type A).